We begin with the raw amino-acid sequence, 968 residues long: Breast cancer anti-estrogen resistance protein 1 (968 aa).

Met-1 carries the post-translational modification N-acetylmethionine. Positions 97-159 (DKNVLAKALY…PGNRLKILVG (63 aa)) constitute an SH3 domain. Residues 164–277 (KPAAPGPGPP…GPGSPAQDIY (114 aa)) form a disordered region. Residues 167-182 (APGPGPPATPPQPQPS) show a composition bias toward pro residues. A substrate for kinases region spans residues 213–514 (YLVPTPSKTQ…DGVYAVPPPA (302 aa)). Tyr-226 is subject to Phosphotyrosine; by SRC. Residues 233 to 249 (PQFQSPPAKQTSTFSKQ) show a composition bias toward polar residues. Position 237 is a phosphoserine (Ser-237). Position 332 is a phosphotyrosine (Tyr-332). Tyr-347 is subject to Phosphotyrosine; by ABL1. Thr-367 carries the post-translational modification Phosphothreonine. Ser-390 carries the phosphoserine modification. The interval 393-416 (KGLPPSNHHSVYDVPPSVSKDVPD) is disordered. Phosphotyrosine occurs at positions 460, 470, and 508. Disordered stretches follow at residues 503–544 (IDDG…SLEV) and 705–756 (RTKA…NSEG). The segment covering 514–524 (AEREAPTDGKR) has biased composition (basic and acidic residues). Positions 525-542 (LSASSTGSTRSSQSASSL) are enriched in low complexity. 3 positions are modified to phosphoserine: Ser-526, Ser-535, and Ser-737. Positions 715–753 (GSSSLHLNPTDKASSIQSRPLPSPPKFTSQDSPDGQYEN) are enriched in polar residues. The SH3-binding motif lies at 733–741 (RPLPSPPKF). The interval 844–894 (FYLEQCEANLTTLTDAVDAFFTAVATNQPPKIFVAHSKFVILSAHKLVFIG) is divergent helix-loop-helix motif.

Belongs to the CAS family. In terms of assembly, forms complexes in vivo with PTK2/FAK1, adapter protein CRKL and LYN kinase. Can heterodimerize with NEDD9. Component of a complex comprised of SH2D3C, BCAR1/CAS, and CRK. Within the complex, interacts with SH2D3C (via C-terminus), and CRK. Part of a complex comprised of PTPRA, BCAR1, BCAR3 (via SH2 domain) and SRC; the formation of the complex is dependent on integrin mediated-tyrosine phosphorylation of PTPRA. Interacts with BCAR3 (via Ras-GEF domain); the interaction regulates adhesion-dependent serine phosphorylation. Interacts with SMAD2 and SMAD3. Interacts with NPHP1. Interacts with PTK2B/PYK2. Interacts (via C-terminus) with SH2D3C/CHAT isoform 2 (via C-terminus). Interacts with activated CSPG4. Interacts with BMX, INPPL1/SHIP2 and PEAK1. Part of a collagen stimulated complex involved in cell migration composed of CDC42, CRK, TNK2 and BCAR1/p130cas. Interacts with TNK2 via SH3 domains. Interacts with PTK2B/PYK2. Interacts (when tyrosine-phosphorylated) with tensin TNS1; the interaction is increased by phosphorylation of TNS1. PTK2/FAK1 activation mediates phosphorylation at the YDYVHL motif; phosphorylation is most likely catalyzed by SRC family members. SRC-family kinases are recruited to the phosphorylated sites and can phosphorylate other tyrosine residues. Tyrosine phosphorylation is triggered by integrin mediated adhesion of cells to the extracellular matrix. In terms of processing, phosphorylated by SRC kinase in a EDN1- and PTK2B-mediated manner; phosphorylation strengthens its interaction with BCAR3 as part of the PTK2B/BCAR1/BCAR3/RAP1 signaling pathway. Post-translationally, dephosphorylated by PTPN14 at Tyr-226. Widely expressed. Higher expression in lung, intestine and testis.

It is found in the cell junction. The protein resides in the focal adhesion. The protein localises to the cytoplasm. It localises to the cell projection. Its subcellular location is the axon. Docking protein which plays a central coordinating role for tyrosine-kinase-based signaling related to cell adhesion. Implicated in induction of cell migration and cell branching. Involved in the BCAR3-mediated inhibition of TGFB signaling. The protein is Breast cancer anti-estrogen resistance protein 1 (Bcar1) of Rattus norvegicus (Rat).